The primary structure comprises 339 residues: MQALVNKIWYQGHPLRWLLLPLSWLFAVITYVRRALFRLGIKSQTAMPVPVIVVGNITVGGSGKTPTVIYLIELLRQHGFTPGVISRGYGVDIQGVRTVNLGASAVEVGDEPAMIVARTQVPMVVGAKRVDAANALIAEFGVDVIICDDGLQHYALGRDIELVVIDGQRGLGNGLLLPAGPLREGAWRLDAVDFIVNNGGPAAKGQFEMQLAPTEVKPVKCDLTSGEYSFDKSQPLVAMAGIGNPARFFESLRAQGYQLALCQGFDDHQPYDKTQLRDLAQDLPLLMTEKDAVKCRDFAQENWWYLAVNAKLSPQFDEQLLARLREVAAAKQGNFHGIR.

An ATP-binding site is contributed by 58–65 (TVGGSGKT).

The protein belongs to the LpxK family.

The catalysed reaction is a lipid A disaccharide + ATP = a lipid IVA + ADP + H(+). It participates in glycolipid biosynthesis; lipid IV(A) biosynthesis; lipid IV(A) from (3R)-3-hydroxytetradecanoyl-[acyl-carrier-protein] and UDP-N-acetyl-alpha-D-glucosamine: step 6/6. Its function is as follows. Transfers the gamma-phosphate of ATP to the 4'-position of a tetraacyldisaccharide 1-phosphate intermediate (termed DS-1-P) to form tetraacyldisaccharide 1,4'-bis-phosphate (lipid IVA). This chain is Tetraacyldisaccharide 4'-kinase, found in Shewanella baltica (strain OS195).